Reading from the N-terminus, the 235-residue chain is Small ribosomal subunit protein uS2 (235 aa).

The protein belongs to the universal ribosomal protein uS2 family.

In Geobacillus stearothermophilus (Bacillus stearothermophilus), this protein is Small ribosomal subunit protein uS2 (rpsB).